A 270-amino-acid polypeptide reads, in one-letter code: Regulator of G-protein signaling rgs-10 (270 aa).

One can recognise an RGS domain in the interval 135–252; sequence SPETLAASEY…LEDPLYLDLV (118 aa).

Functionally, shown to have a role in viability and embryogenesis. The chain is Regulator of G-protein signaling rgs-10 (rgs-10) from Caenorhabditis elegans.